Here is a 65-residue protein sequence, read N- to C-terminus: Metallothionein-like protein 3B (65 aa).

Belongs to the metallothionein superfamily. Type 15 family.

In terms of biological role, metallothioneins have a high content of cysteine residues that bind various heavy metals. The polypeptide is Metallothionein-like protein 3B (MT3B) (Oryza sativa subsp. indica (Rice)).